We begin with the raw amino-acid sequence, 306 residues long: Methionyl-tRNA formyltransferase (306 aa).

110 to 113 contacts (6S)-5,6,7,8-tetrahydrofolate; the sequence is SLLP.

This sequence belongs to the Fmt family.

It catalyses the reaction L-methionyl-tRNA(fMet) + (6R)-10-formyltetrahydrofolate = N-formyl-L-methionyl-tRNA(fMet) + (6S)-5,6,7,8-tetrahydrofolate + H(+). Attaches a formyl group to the free amino group of methionyl-tRNA(fMet). The formyl group appears to play a dual role in the initiator identity of N-formylmethionyl-tRNA by promoting its recognition by IF2 and preventing the misappropriation of this tRNA by the elongation apparatus. The polypeptide is Methionyl-tRNA formyltransferase (Brucella anthropi (strain ATCC 49188 / DSM 6882 / CCUG 24695 / JCM 21032 / LMG 3331 / NBRC 15819 / NCTC 12168 / Alc 37) (Ochrobactrum anthropi)).